A 350-amino-acid polypeptide reads, in one-letter code: Lipoyl synthase, mitochondrial (350 aa).

7 residues coordinate [4Fe-4S] cluster: Cys83, Cys88, Cys94, Cys113, Cys117, Cys120, and Ser328. Positions 96–317 (GGESGTATAT…EKVGNELGFA (222 aa)) constitute a Radical SAM core domain.

The protein belongs to the radical SAM superfamily. Lipoyl synthase family. [4Fe-4S] cluster is required as a cofactor.

It is found in the mitochondrion. The enzyme catalyses [[Fe-S] cluster scaffold protein carrying a second [4Fe-4S](2+) cluster] + N(6)-octanoyl-L-lysyl-[protein] + 2 oxidized [2Fe-2S]-[ferredoxin] + 2 S-adenosyl-L-methionine + 4 H(+) = [[Fe-S] cluster scaffold protein] + N(6)-[(R)-dihydrolipoyl]-L-lysyl-[protein] + 4 Fe(3+) + 2 hydrogen sulfide + 2 5'-deoxyadenosine + 2 L-methionine + 2 reduced [2Fe-2S]-[ferredoxin]. It participates in protein modification; protein lipoylation via endogenous pathway; protein N(6)-(lipoyl)lysine from octanoyl-[acyl-carrier-protein]: step 2/2. In terms of biological role, catalyzes the radical-mediated insertion of two sulfur atoms into the C-6 and C-8 positions of the octanoyl moiety bound to the lipoyl domains of lipoate-dependent enzymes, thereby converting the octanoylated domains into lipoylated derivatives. The sequence is that of Lipoyl synthase, mitochondrial from Trichoplax adhaerens (Trichoplax reptans).